A 416-amino-acid polypeptide reads, in one-letter code: Cyclin-dependent kinase 8 (416 aa).

Residues 1–15 are interaction with CCNC; it reads MDYDFKVKLTGERER. The Protein kinase domain maps to 21-287; it reads EYEGCKVGRG…SEQAMQDPYF (267 aa). Residues 27–35 and lysine 52 each bind ATP; that span reads VGRGTYGHV. Residue aspartate 151 is the Proton acceptor of the active site. The disordered stretch occupies residues 313–416; sequence EEEPDDKGDK…PQYSHQTHRY (104 aa). A compositionally biased stretch (low complexity) spans 325 to 343; it reads QQQQQGNNHTNGTGHPGNQ. Polar residues-rich tracts occupy residues 361–378 and 386–416; these read PTTT…QRSN and PGPS…THRY.

It belongs to the protein kinase superfamily. CMGC Ser/Thr protein kinase family. CDC2/CDKX subfamily. In terms of assembly, component of the Mediator complex. Interacts with ccnc. Requires Mg(2+) as cofactor.

The protein localises to the nucleus. It catalyses the reaction L-seryl-[protein] + ATP = O-phospho-L-seryl-[protein] + ADP + H(+). The enzyme catalyses L-threonyl-[protein] + ATP = O-phospho-L-threonyl-[protein] + ADP + H(+). It carries out the reaction [DNA-directed RNA polymerase] + ATP = phospho-[DNA-directed RNA polymerase] + ADP + H(+). Component of the Mediator complex, a coactivator involved in regulated gene transcription of nearly all RNA polymerase II-dependent genes. Mediator functions as a bridge to convey information from gene-specific regulatory proteins to the basal RNA polymerase II transcription machinery. Mediator is recruited to promoters by direct interactions with regulatory proteins and serves as a scaffold for the assembly of a functional pre-initiation complex with RNA polymerase II and the general transcription factors. Phosphorylates the CTD (C-terminal domain) of the large subunit of RNA polymerase II (RNAp II), which may inhibit the formation of a transcription initiation complex. This chain is Cyclin-dependent kinase 8 (cdk8), found in Xenopus laevis (African clawed frog).